Here is a 569-residue protein sequence, read N- to C-terminus: CTP synthase (569 aa).

The interval 1-276 (MNQATPTKHV…DAYLVRRLDL (276 aa)) is amidoligase domain. Ser-18 lines the CTP pocket. Ser-18 contacts UTP. Residues 19 to 24 (SLGKGL) and Asp-76 each bind ATP. 2 residues coordinate Mg(2+): Asp-76 and Glu-150. CTP-binding positions include 157-159 (DIE), 197-202 (KTKPTQ), and Lys-233. Residues 197–202 (KTKPTQ) and Lys-233 each bind UTP. The Glutamine amidotransferase type-1 domain occupies 301–550 (TVALVGKYVD…VGAAIERQRE (250 aa)). Position 364 (Gly-364) interacts with L-glutamine. Cys-391 serves as the catalytic Nucleophile; for glutamine hydrolysis. L-glutamine-binding positions include 392–395 (LGLQ), Glu-415, and Arg-476. Residues His-523 and Glu-525 contribute to the active site.

It belongs to the CTP synthase family. In terms of assembly, homotetramer.

It catalyses the reaction UTP + L-glutamine + ATP + H2O = CTP + L-glutamate + ADP + phosphate + 2 H(+). The catalysed reaction is L-glutamine + H2O = L-glutamate + NH4(+). It carries out the reaction UTP + NH4(+) + ATP = CTP + ADP + phosphate + 2 H(+). It participates in pyrimidine metabolism; CTP biosynthesis via de novo pathway; CTP from UDP: step 2/2. Its activity is regulated as follows. Allosterically activated by GTP, when glutamine is the substrate; GTP has no effect on the reaction when ammonia is the substrate. The allosteric effector GTP functions by stabilizing the protein conformation that binds the tetrahedral intermediate(s) formed during glutamine hydrolysis. Inhibited by the product CTP, via allosteric rather than competitive inhibition. In terms of biological role, catalyzes the ATP-dependent amination of UTP to CTP with either L-glutamine or ammonia as the source of nitrogen. Regulates intracellular CTP levels through interactions with the four ribonucleotide triphosphates. The protein is CTP synthase of Nocardioides sp. (strain ATCC BAA-499 / JS614).